Consider the following 108-residue polypeptide: C-C motif chemokine 19 (108 aa).

The N-terminal stretch at 1–25 is a signal peptide; the sequence is MAPRVTPLLAFSLLVLWTFPAPTLG. 2 cysteine pairs are disulfide-bonded: Cys33–Cys59 and Cys34–Cys75. Residue Asn100 is glycosylated (N-linked (GlcNAc...) asparagine).

This sequence belongs to the intercrine beta (chemokine CC) family. In terms of assembly, interacts with TNFAIP6 (via Link domain). As to expression, highly expressed by dendritic cells in mesenteric and peripheral lymph nodes. Significant expression in spleen (T cell zone or periarteriolar lymphatic sheath) and Peyer patches. Low expression in thymus.

It is found in the secreted. Functionally, strongly chemotactic for naive (L-selectinhi) CD4 T-cells and for CD8 T-cells and weakly attractive for resting B-cells and memory (L-selectinlo) CD4 T-cells. May play a role in promoting encounters between recirculating T-cells and dendritic cells and in the migration of activated B-cells into the T-zone of secondary lymphoid tissues. Binds to chemokine receptor CCR7. Binds to atypical chemokine receptor ACKR4 and mediates the recruitment of beta-arrestin (ARRB1/2) to ACKR4. The sequence is that of C-C motif chemokine 19 (Ccl19) from Mus musculus (Mouse).